A 90-amino-acid chain; its full sequence is Evasin P1126 (90 aa).

Positions 1–25 (MTSHSAVRIAIFAVIALHSIFECLS) are cleaved as a signal peptide. 3 cysteine pairs are disulfide-bonded: C46/C62, C50/C64, and C58/C75. Residue N55 is glycosylated (N-linked (GlcNAc...) asparagine). N77 carries an N-linked (GlcNAc...) asparagine glycan.

The protein resides in the secreted. In terms of biological role, salivary chemokine-binding protein which binds to host chemokines CXCL1, CXCL2, CXCL3, CXCL4, CXCL5, CXCL6, CXCL7, CXCL10 and CXCL11. The sequence is that of Evasin P1126 from Amblyomma cajennense (Cayenne tick).